The chain runs to 158 residues: Eukaryotic translation initiation factor 5A-3 (158 aa).

Basic and acidic residues predominate over residues 1–10 (MSDDEHHFES). A disordered region spans residues 1-23 (MSDDEHHFESSDAGASKTYPQQA). Serine 2 is subject to Phosphoserine. The residue at position 51 (lysine 51) is a Hypusine.

It belongs to the eIF-5A family. Post-translationally, lys-52 undergoes hypusination, a unique post-translational modification that consists in the addition of a butylamino group from spermidine to lysine side chain, leading to the formation of the unusual amino acid hypusine. eIF-5As are the only known proteins to undergo this modification, which is essential for their function. Expressed in the vascular tissues of roots, stems and leaves. Localized in phloem companion cells rather than sieve-tube members. Not expressed in xylem or procambium. Detected in root tips and in the chalazal tissue of fertilized ovules.

Its function is as follows. Translation factor that promotes translation elongation and termination, particularly upon ribosome stalling at specific amino acid sequence contexts. Binds between the exit (E) and peptidyl (P) site of the ribosome and promotes rescue of stalled ribosome: specifically required for efficient translation of polyproline-containing peptides as well as other motifs that stall the ribosome. Acts as a ribosome quality control (RQC) cofactor by joining the RQC complex to facilitate peptidyl transfer during CAT tailing step. Involved in supporting growth and plays a regulatory role in the response to sub-lethal osmotic and nutrient stress. The sequence is that of Eukaryotic translation initiation factor 5A-3 (ELF5A-3) from Arabidopsis thaliana (Mouse-ear cress).